The sequence spans 64 residues: Large ribosomal subunit protein uL30 (64 aa).

The interval 1–22 (MAKAAKTIKVEQTRSAIRRQHS) is disordered.

Belongs to the universal ribosomal protein uL30 family. Part of the 50S ribosomal subunit.

This Nitrobacter hamburgensis (strain DSM 10229 / NCIMB 13809 / X14) protein is Large ribosomal subunit protein uL30.